The sequence spans 96 residues: Co-chaperonin GroES (96 aa).

It belongs to the GroES chaperonin family. In terms of assembly, heptamer of 7 subunits arranged in a ring. Interacts with the chaperonin GroEL.

It localises to the cytoplasm. Functionally, together with the chaperonin GroEL, plays an essential role in assisting protein folding. The GroEL-GroES system forms a nano-cage that allows encapsulation of the non-native substrate proteins and provides a physical environment optimized to promote and accelerate protein folding. GroES binds to the apical surface of the GroEL ring, thereby capping the opening of the GroEL channel. This Wolbachia sp. subsp. Brugia malayi (strain TRS) protein is Co-chaperonin GroES.